The following is a 288-amino-acid chain: Bifunctional protein FolD (288 aa).

NADP(+) is bound by residues 166–168 and Ile-232; that span reads GAS.

The protein belongs to the tetrahydrofolate dehydrogenase/cyclohydrolase family. As to quaternary structure, homodimer.

It catalyses the reaction (6R)-5,10-methylene-5,6,7,8-tetrahydrofolate + NADP(+) = (6R)-5,10-methenyltetrahydrofolate + NADPH. The catalysed reaction is (6R)-5,10-methenyltetrahydrofolate + H2O = (6R)-10-formyltetrahydrofolate + H(+). It participates in one-carbon metabolism; tetrahydrofolate interconversion. Catalyzes the oxidation of 5,10-methylenetetrahydrofolate to 5,10-methenyltetrahydrofolate and then the hydrolysis of 5,10-methenyltetrahydrofolate to 10-formyltetrahydrofolate. The sequence is that of Bifunctional protein FolD from Acidithiobacillus ferrooxidans (strain ATCC 23270 / DSM 14882 / CIP 104768 / NCIMB 8455) (Ferrobacillus ferrooxidans (strain ATCC 23270)).